The primary structure comprises 255 residues: Flagellar brake protein YcgR (255 aa).

A PilZ domain is found at 130-245 (QRREHFRVPL…MAAHLQRFVM (116 aa)).

The protein belongs to the YcgR family. As to quaternary structure, monomer. Interacts with the flagellar basal bodies.

Its subcellular location is the bacterial flagellum basal body. In terms of biological role, acts as a flagellar brake, regulating swimming and swarming in a bis-(3'-5') cyclic diguanylic acid (c-di-GMP)-dependent manner. Binds 1 c-di-GMP dimer per subunit. Increasing levels of c-di-GMP lead to decreased motility. This Thiobacillus denitrificans (strain ATCC 25259 / T1) protein is Flagellar brake protein YcgR.